The sequence spans 282 residues: Putative hydrolase Bmul_3283/BMULJ_05242 (282 aa).

The Mg(2+) site is built by Glu124, Glu126, and Asp155.

This sequence belongs to the FAH family. It depends on Mg(2+) as a cofactor.

The polypeptide is Putative hydrolase Bmul_3283/BMULJ_05242 (Burkholderia multivorans (strain ATCC 17616 / 249)).